Consider the following 219-residue polypeptide: Nuclear transcription factor Y subunit B-8 (219 aa).

A disordered region spans residues methionine 1 to aspartate 26. Residues leucine 29–serine 35 mediate DNA binding. The subunit association domain (SAD) stretch occupies residues valine 56–isoleucine 67. Residues alanine 119 to threonine 134 show a composition bias toward low complexity. Disordered stretches follow at residues alanine 119–alanine 142 and glycine 166–alanine 219. Over residues glycine 190 to serine 206 the composition is skewed to gly residues.

Belongs to the NFYB/HAP3 subunit family. Heterotrimeric transcription factor composed of three components, NF-YA, NF-YB and NF-YC. NF-YB and NF-YC must interact and dimerize for NF-YA association and DNA binding. Interacts with NFYC2, NFYC4 and NFYC6.

Its subcellular location is the cytoplasm. Its function is as follows. Component of the NF-Y/HAP transcription factor complex. The sequence is that of Nuclear transcription factor Y subunit B-8 from Oryza sativa subsp. japonica (Rice).